The following is a 481-amino-acid chain: OTU domain-containing protein 1 (481 aa).

Disordered stretches follow at residues 18-60 and 202-282; these read PTAA…AAAE and LAAA…IVSR. Low complexity predominate over residues 38–58; that stretch reads PPGAAGAAPEPETGECQPAAA. Over residues 225 to 257 the composition is skewed to basic and acidic residues; it reads GEEHLAERGPRGWERGGDRCDAPGGDAARRPDP. Residues 261–281 are compositionally biased toward low complexity; sequence APPAGSIEAAPSSAAEPVIVS. The OTU domain maps to 309 to 438; sequence KYRFHIIPDG…NGHYDAVFDH (130 aa). The interval 314 to 320 is cys-loop; it reads IIPDGNC. Asp-317 is an active-site residue. Cys-320 (nucleophile) is an active-site residue. Residues 369-379 form a his-loop region; it reads AAQDGAWAGYP. The variable-loop stretch occupies residues 426 to 431; sequence WLSNGH. Residue His-431 is part of the active site. A UIM domain is found at 457–476; the sequence is KRDEELAKSMAISLSKMYIE.

It carries out the reaction Thiol-dependent hydrolysis of ester, thioester, amide, peptide and isopeptide bonds formed by the C-terminal Gly of ubiquitin (a 76-residue protein attached to proteins as an intracellular targeting signal).. Functionally, deubiquitinating enzyme that specifically hydrolyzes 'Lys-63'-linked polyubiquitin to monoubiquitin. Required for the stability and translation of a subset mRNAs with a high abundance of rare codons by mediating deubiquitination of 40S ribosomal protein RPS10/eS10, thereby antagonizing ZNF598-mediated 40S ubiquitination. The abundance of rare codons in mRNAs can limit the translation rate and can lead to ribosome collisions that trigger activation of ribosome quality control (RQC) pathway by ZNF598. OTUD1-mediated deubiquitination prevents activation of the RQC and subsequent dissociation of ribosomes and stimulates formation of polysomes and translation. The protein is OTU domain-containing protein 1 of Homo sapiens (Human).